The chain runs to 969 residues: MVKNLKRKERDEHESDSDEEIDIAGNLVADGSDSESDDSSDGSDEEVQDVIEYSSDEEEPAKPAKAVKKKVEDKSFPSLELSDDEDEKKKVDNDDDDVNAYFSVNTDAKSKHKKGSFASFGLSKLILVNISKRGFRQPTPIQRKTIPLILQNRDIVGMARTGSGKTAAFVLPMIEKLKTHSSKIGARAIILSPSRELAMQTHSVFKEFSRGTHLRSVLLTGGDSLEDQFGMMMTNPDVIIATPGRFLHLKVEMNLDLKSVEYAVFDEADRLFEMGFQEQLNELLAALPSSRQTLLFSATLPTSLVDFAKAGLVNPVLVRLDAESKISDNLEMLFLSTKNDEREANLLYILQEVIKLPLATPEQIKQLNDNKADDSDESAEEDEDKKRRKRKSFNRKAMPKANELPSEKATVVFVPTRHHVEYLSNLLKDCGYLVSYIYGALDQHARKSQLYNFRIGLTSILVVTDVAARGVDIPMLANVVNYSLPASSKIFIHRVGRTARAGNRGWAYSIVSENELPYLLDLELFLGRKILLTPMYEALERLSKEKWVAEGNDETLFQSPKISYTSRMVLGSCPRLDIEALSELYNNLMKSNFDLDMAKKTALKAEKLYFRTRTSASPESLKRSKEIISSGWDEQNVLFGKNLEKEKNAFLEKLQNRRNKETVFEFTRNPEDEMANLMHRRRRAIAPIQRKAKERKELLEKERMAGLTHALEDEILKGDDAEVGYTVTEDTLKAFEDADTILAEQENASKKKKKTFRDPNFFLSHYAPANEIQDKQLELSGGFINEAAQSAYDLNSDDKVQVHKQTATVKWDKKRKKYVNMNGIDNKKYIIGESGQKIAASFRSGKFDEWSKARKLAPLKTGANESSIPSNLLVDPTRGPGKSGSKLPNGKFKHKLEKAPRLPDKKRDDYHKQKKKVESALERGIAVKGYNNAPAFKSELKSVAQIRKDRKTKENRHAKNARPSKKRKF.

Disordered stretches follow at residues M1–D73 and S78–D97. Residues S32–E59 are compositionally biased toward acidic residues. The short motif at G115–R143 is the Q motif element. One can recognise a Helicase ATP-binding domain in the interval I146–V318. A159–T166 lines the ATP pocket. Residues D266–D269 carry the DEAD box motif. 3 disordered regions span residues Q366 to N402, K860 to G924, and I946 to F969. Residues D374 to E383 are compositionally biased toward acidic residues. A compositionally biased stretch (basic residues) spans K386 to M398. In terms of domain architecture, Helicase C-terminal spans K396–S543. The span at E897–L921 shows a compositional bias: basic and acidic residues. Residues A958–F969 show a composition bias toward basic residues.

This sequence belongs to the DEAD box helicase family. DDX54/DBP10 subfamily.

It localises to the nucleus. The protein localises to the nucleolus. The enzyme catalyses ATP + H2O = ADP + phosphate + H(+). ATP-binding RNA helicase involved in the biogenesis of 60S ribosomal subunits and is required for the normal formation of 25S and 5.8S rRNAs. This is ATP-dependent RNA helicase DBP10 (DBP10) from Candida glabrata (strain ATCC 2001 / BCRC 20586 / JCM 3761 / NBRC 0622 / NRRL Y-65 / CBS 138) (Yeast).